We begin with the raw amino-acid sequence, 209 residues long: Large ribosomal subunit protein eL13 (209 aa).

It belongs to the eukaryotic ribosomal protein eL13 family. Component of the 60S large ribosomal subunit (LSU).

It is found in the cytoplasm. In terms of biological role, component of the ribosome, a large ribonucleoprotein complex responsible for the synthesis of proteins in the cell. The small ribosomal subunit (SSU) binds messenger RNAs (mRNAs) and translates the encoded message by selecting cognate aminoacyl-transfer RNA (tRNA) molecules. The large subunit (LSU) contains the ribosomal catalytic site termed the peptidyl transferase center (PTC), which catalyzes the formation of peptide bonds, thereby polymerizing the amino acids delivered by tRNAs into a polypeptide chain. The nascent polypeptides leave the ribosome through a tunnel in the LSU and interact with protein factors that function in enzymatic processing, targeting, and the membrane insertion of nascent chains at the exit of the ribosomal tunnel. As part of the LSU, it is probably required for its formation and the maturation of rRNAs. This is Large ribosomal subunit protein eL13 (rpl13) from Dictyostelium discoideum (Social amoeba).